The sequence spans 169 residues: MKVFLGLLLGFSIILILTYQSPTTQHPPKEELAYWCTYAKSCDFCWDCQNDTCINKVINESISITSIVNCRVTRDSQSCFYDISVKIPNHHSMECSYPRLYEHEMFMEKWRDEYWPIIIKQCCFYLVFSFAFAGCVAFAICKNLRLRTTIKLLILLSILVWLSQPILNN.

3 consecutive transmembrane segments (helical) span residues 2–20 (KVFL…LTYQ), 121–141 (QCCF…FAIC), and 148–168 (TTIK…PILN).

Belongs to the asfivirus MGF 110 family.

It localises to the host membrane. Functionally, plays a role in virus cell tropism, and may be required for efficient virus replication in macrophages. The chain is Protein MGF 110-12L from African swine fever virus (isolate Pig/Kenya/KEN-50/1950) (ASFV).